Consider the following 233-residue polypeptide: Large ribosomal subunit protein uL2 (233 aa).

Positions 194 to 233 are disordered; that stretch reads HPHGGGNHQHVGRPSTVGRGTPPGRKVGRLSPKRRKKYGR. A compositionally biased stretch (basic residues) spans 219-233; that stretch reads KVGRLSPKRRKKYGR.

It belongs to the universal ribosomal protein uL2 family. In terms of assembly, part of the 50S ribosomal subunit. Forms a bridge to the 30S subunit in the 70S ribosome.

Its function is as follows. One of the primary rRNA binding proteins. Required for association of the 30S and 50S subunits to form the 70S ribosome, for tRNA binding and peptide bond formation. It has been suggested to have peptidyltransferase activity; this is somewhat controversial. Makes several contacts with the 16S rRNA in the 70S ribosome. The protein is Large ribosomal subunit protein uL2 of Picrophilus torridus (strain ATCC 700027 / DSM 9790 / JCM 10055 / NBRC 100828 / KAW 2/3).